The primary structure comprises 86 residues: MNYLILISFALLVITGVESARDAYIAKPHNCVYECFDAFSSYCNGVCTKNGAKSGYCQILGTYGNGCWCIALPDNVPIRIPGKCHR.

The first 19 residues, 1-19 (MNYLILISFALLVITGVES), serve as a signal peptide directing secretion. The region spanning 21-85 (RDAYIAKPHN…VPIRIPGKCH (65 aa)) is the LCN-type CS-alpha/beta domain. 4 cysteine pairs are disulfide-bonded: Cys-31–Cys-84, Cys-35–Cys-57, Cys-43–Cys-67, and Cys-47–Cys-69. Position 86 (Arg-86) is a propeptide, removed by a carboxypeptidase.

It belongs to the long (4 C-C) scorpion toxin superfamily. Sodium channel inhibitor family. Alpha subfamily. Expressed by the venom gland.

The protein localises to the secreted. Functionally, alpha toxins bind voltage-independently at site-3 of sodium channels (Nav) and inhibit the inactivation of the activated channels, thereby blocking neuronal transmission. This toxin inhibits inactivation of Nav1.6/SCN8A (EC(50)=790 nM) and drosophila DmNav1 (EC(50)=280 nM). The toxin (1 uM) does not significantly shift the midpoint of activation at the two channels, but induces a significant depolarizing shift in the V(1/2) of inactivation of the channels. Has antimicrobial activity. This chain is Sodium channel neurotoxin MeuNaTxalpha-5, found in Mesobuthus eupeus (Lesser Asian scorpion).